The following is a 549-amino-acid chain: Adhesion G protein-coupled receptor G3 (549 aa).

The first 20 residues, 1 to 20 (MATPRGLGALLLLLLLPTSG), serve as a signal peptide directing secretion. Residues 21–270 (QEKPTEGPRN…DQSTVHILTR (250 aa)) are Extracellular-facing. Residues asparagine 98, asparagine 144, and asparagine 210 are each glycosylated (N-linked (GlcNAc...) asparagine). The GAIN-B domain maps to 107 to 262 (FYFSLEPSQV…ALLLRPTLDQ (156 aa)). 2 disulfide bridges follow: cysteine 215–cysteine 244 and cysteine 233–cysteine 246. The GPS stretch occupies residues 215–262 (CVFWDVTKGTTGDWSSEGCSTEVRPEGTVCCCDHLTFFALLLRPTLDQ). The interval 251–259 (FFALLLRPT) is stachel. A helical transmembrane segment spans residues 271-295 (ISQAGCGVSMIFLAFTIILYAFLRL). Residues 296–304 (SRERFKSED) are Cytoplasmic-facing. The helical transmembrane segment at 305–326 (APKIHVALGGSLFLLNLAFLVN) threads the bilayer. Topologically, residues 327–338 (VGSGSKGSDAAC) are extracellular. A disulfide bridge links cysteine 338 with cysteine 420. The helical transmembrane segment at 339–364 (WARGAVFHYFLLCAFTWMGLEAFHLY) threads the bilayer. At 365–378 (LLAVRVFNTYFGHY) the chain is on the cytoplasmic side. The helical transmembrane segment at 379 to 400 (FLKLSLVGWGLPALMVIGTGSA) threads the bilayer. Residues 401 to 428 (NSYGLYTIRDRENRTSLELCWFREGTTM) lie on the Extracellular side of the membrane. Asparagine 413 carries an N-linked (GlcNAc...) asparagine glycan. Residues 429–454 (YALYITVHGYFLITFLFGMVVLALVV) traverse the membrane as a helical segment. The Cytoplasmic portion of the chain corresponds to 455-474 (WKIFTLSRATAVKERGKNRK). A helical membrane pass occupies residues 475–495 (KVLTLLGLSSLVGVTWGLAIF). Topologically, residues 496 to 501 (TPLGLS) are extracellular. A helical transmembrane segment spans residues 502–525 (TVYIFALFNSLQGVFICCWFTILY). A cortisol-binding site is contributed by asparagine 510. Residues 526 to 549 (LPSQSTTVSSSTARLDQAHSASQE) are Cytoplasmic-facing.

Belongs to the G-protein coupled receptor 2 family. Adhesion G-protein coupled receptor (ADGR) subfamily. In terms of assembly, heterodimer of 2 chains generated by proteolytic processing; the large extracellular N-terminal fragment and the membrane-bound C-terminal fragment predominantly remain associated and non-covalently linked. Interacts with PRTN3; this interaction induces the activation of PAR2. Interacts with GNAO1 (when palmitoylated). Autoproteolytically processed at the GPS region of the GAIN-B domain; this cleavage modulates receptor activity. In terms of processing, O- and N-glycosylated. As to expression, expressed in cultured primary dermal lymphatic endothelial cells. Highly expressed in polymorphonuclear cells (PMNs) including neutrophilic, eosinophilic, and basophilic granulocytes.

It localises to the cell membrane. Its activity is regulated as follows. Forms a heterodimer of 2 chains generated by proteolytic processing that remain associated through non-covalent interactions mediated by the GAIN-B domain. In the inactivated receptor, the Stachel sequence (also named stalk) is embedded in the GAIN-B domain, where it adopts a beta-strand conformation. On activation, the Stachel moves into the 7 transmembrane region and adopts a twisted hook-shaped configuration that forms contacts within the receptor, leading to coupling of a G-alpha protein, which activates signaling. The cleaved GAIN-B and N-terminal domains can then dissociate from the rest of the receptor. Its function is as follows. Adhesion G-protein coupled receptor (aGPCR) for glucocorticoid hormones such as cortisol, cortisone and 11-deoxycortisol. Ligand binding causes a conformation change that triggers signaling via guanine nucleotide-binding proteins (G proteins) and modulates the activity of downstream effectors, such as adenylate cyclase. ADGRG3/GPR97 is coupled to G(o)/GNAO1 G proteins and mediates signaling by inhibiting adenylate cyclase activity. May also signal through G-alpha(q)-proteins; additional evidence are however required to confirm this result in vivo. Plays a role in the regulation of various processes including B-cell development, inflammation or innate immunity. Regulates migration of lymphatic endothelial cells in vitro via the small GTPases RhoA and CDC42. Antibody ligation leads to the production and activation of antimicrobial mediators like reactive oxygen species (ROS) and myeloperoxidase (MPO) as well as enhanced bacteria uptake and killing by granulocytes. Additionally, collaborates with protease-activated receptor 2/PAR2 to stimulate neutrophil-driven antimicrobial responses and endothelial cell activation. This is Adhesion G protein-coupled receptor G3 from Homo sapiens (Human).